A 110-amino-acid chain; its full sequence is Coiled-coil-helix-coiled-coil-helix domain-containing protein 5 (110 aa).

Methionine 1 carries the post-translational modification N-acetylmethionine. CHCH domains follow at residues 9-52 and 55-97; these read ARYC…PIIR and RQAC…QPPS. 4 short sequence motifs (cx9C motif) span residues 12 to 22, 34 to 44, 58 to 68, and 79 to 89; these read CSRELDQYGQC, CHHLKMSIARC, CAEPFEAFEKC, and CAEHMRRFLQC. 4 disulfide bridges follow: cysteine 12–cysteine 44, cysteine 22–cysteine 34, cysteine 58–cysteine 89, and cysteine 68–cysteine 79.

In terms of assembly, monomer.

The protein localises to the mitochondrion intermembrane space. The protein is Coiled-coil-helix-coiled-coil-helix domain-containing protein 5 (Chchd5) of Mus musculus (Mouse).